Here is a 211-residue protein sequence, read N- to C-terminus: Soluble inorganic pyrophosphatase PPA1 (211 aa).

Positions 61 and 75 each coordinate substrate. The Proton donor role is filled by Tyr-83. Residue Tyr-87 participates in substrate binding. Positions 97, 102, and 134 each coordinate Mg(2+). Substrate is bound at residue Tyr-171.

The protein belongs to the PPase family. It depends on Mg(2+) as a cofactor.

The protein localises to the cytoplasm. It carries out the reaction diphosphate + H2O = 2 phosphate + H(+). Its activity is regulated as follows. Strongly inhibited by Ca(2+). Catalyzes the irreversible hydrolysis of pyrophosphate (PPi) to phosphate. This chain is Soluble inorganic pyrophosphatase PPA1, found in Solanum tuberosum (Potato).